The sequence spans 304 residues: Ribonuclease BN (304 aa).

Zn(2+) contacts are provided by His63, His65, Asp67, His68, His140, Asp211, and His269. The Proton acceptor role is filled by Asp67.

Belongs to the RNase Z family. RNase BN subfamily. In terms of assembly, homodimer. It depends on Zn(2+) as a cofactor.

In terms of biological role, zinc phosphodiesterase, which has both exoribonuclease and endoribonuclease activities. This chain is Ribonuclease BN, found in Cronobacter sakazakii (strain ATCC BAA-894) (Enterobacter sakazakii).